The following is a 231-amino-acid chain: Cytidylate kinase (231 aa).

18 to 26 (GPSGTGKSS) provides a ligand contact to ATP.

The protein belongs to the cytidylate kinase family. Type 1 subfamily.

It is found in the cytoplasm. The catalysed reaction is CMP + ATP = CDP + ADP. It catalyses the reaction dCMP + ATP = dCDP + ADP. The sequence is that of Cytidylate kinase from Streptomyces griseus subsp. griseus (strain JCM 4626 / CBS 651.72 / NBRC 13350 / KCC S-0626 / ISP 5235).